A 396-amino-acid chain; its full sequence is Acetate kinase (396 aa).

Residue Asn7 coordinates Mg(2+). Residue Lys14 coordinates ATP. Substrate is bound at residue Arg88. Asp145 functions as the Proton donor/acceptor in the catalytic mechanism. ATP is bound by residues His205–Gly209, Asp279–Arg281, and Gly327–Asn331. Glu381 provides a ligand contact to Mg(2+).

This sequence belongs to the acetokinase family. Homodimer. Requires Mg(2+) as cofactor. The cofactor is Mn(2+).

Its subcellular location is the cytoplasm. It carries out the reaction acetate + ATP = acetyl phosphate + ADP. The protein operates within metabolic intermediate biosynthesis; acetyl-CoA biosynthesis; acetyl-CoA from acetate: step 1/2. Functionally, catalyzes the formation of acetyl phosphate from acetate and ATP. Can also catalyze the reverse reaction. This Campylobacter jejuni subsp. jejuni serotype O:2 (strain ATCC 700819 / NCTC 11168) protein is Acetate kinase.